The primary structure comprises 280 residues: Exfoliative toxin A (280 aa).

An N-terminal signal peptide occupies residues 1–38 (MNNSKIISKVLLSLSLFTVGASAFVIQDELMQKNHAKA). Catalysis depends on charge relay system residues His-110, Asp-158, and Ser-233.

The protein belongs to the peptidase S1B family. Requires Ca(2+) as cofactor.

Its function is as follows. Has serine protease-like properties and binds to the skin protein profilaggrin. Cleaves substrates after acidic residues. Exfoliative toxins cause impetigous diseases commonly referred as staphylococcal scalded skin syndrome (SSSS). In Staphylococcus aureus, this protein is Exfoliative toxin A (eta).